Consider the following 204-residue polypeptide: Large ribosomal subunit protein bL25 (204 aa).

This sequence belongs to the bacterial ribosomal protein bL25 family. CTC subfamily. Part of the 50S ribosomal subunit; part of the 5S rRNA/L5/L18/L25 subcomplex. Contacts the 5S rRNA. Binds to the 5S rRNA independently of L5 and L18.

This is one of the proteins that binds to the 5S RNA in the ribosome where it forms part of the central protuberance. In Pseudomonas syringae pv. syringae (strain B728a), this protein is Large ribosomal subunit protein bL25.